A 442-amino-acid polypeptide reads, in one-letter code: Protein phosphatase 2C 3 (442 aa).

The tract at residues Arg-30–Val-100 is disordered. Residues Pro-79–Asp-90 show a composition bias toward acidic residues. Residues Arg-120–Leu-433 enclose the PPM-type phosphatase domain. 3 residues coordinate Mn(2+): Asp-162, Gly-163, and Asp-339. The segment at Gly-363 to Ile-401 is disordered. Basic and acidic residues predominate over residues Arg-376–Val-390. Residue Asp-424 coordinates Mn(2+).

Belongs to the PP2C family. As to quaternary structure, part of a K(+)-channel calcium-sensing kinase/phosphatase complex composed by a calcium sensor CBL (CBL1, CBL2, CBL3 or CBL9), a kinase CIPK (CIPK6, CIPK16 or CIPK23), a phosphatase PP2C (AIP1) and a K(+)-channel (AKT1). Interacts with AKT1 and CIPK23. Interacts with PYL8/RCAR3 in an abscisic acid-independent. Interacts with PYR1/RCAR11 in an abscisic acid-dependent manner. Mg(2+) serves as cofactor. Mn(2+) is required as a cofactor. In terms of tissue distribution, expressed in shoot meristem, vascular tissues of cotyledons, and in primary roots surrounding the root meristem. Highly expressed in seeds.

Its subcellular location is the cell membrane. It localises to the cytoplasm. It is found in the nucleus. It catalyses the reaction O-phospho-L-seryl-[protein] + H2O = L-seryl-[protein] + phosphate. The catalysed reaction is O-phospho-L-threonyl-[protein] + H2O = L-threonyl-[protein] + phosphate. Functionally, involved in the negative regulation of the K(+) potassium channel AKT1 by its dephosphorylation, antagonistically to CIPK proteins (e.g. CIPK23). Functions as a positive regulator of abscisic acid-mediated cell signaling during seedling growth. Involved in the regulation of seed dormancy. Acts as a negative regulator of seed dormancy by inhibiting abscisic signaling and subsequently activating gibberellic acid signaling. The protein is Protein phosphatase 2C 3 of Arabidopsis thaliana (Mouse-ear cress).